The following is a 179-amino-acid chain: Ribosome-recycling factor (179 aa).

This sequence belongs to the RRF family.

The protein localises to the cytoplasm. Responsible for the release of ribosomes from messenger RNA at the termination of protein biosynthesis. May increase the efficiency of translation by recycling ribosomes from one round of translation to another. This is Ribosome-recycling factor from Chlamydia trachomatis serovar A (strain ATCC VR-571B / DSM 19440 / HAR-13).